The following is a 231-amino-acid chain: Lipoprotein-releasing system ATP-binding protein LolD (231 aa).

The 222-residue stretch at 9 to 230 (FSLKDVGKEY…LRAGELYDQN (222 aa)) folds into the ABC transporter domain. Residue 45–52 (GASGSGKS) participates in ATP binding.

The protein belongs to the ABC transporter superfamily. Lipoprotein translocase (TC 3.A.1.125) family. As to quaternary structure, the complex is composed of two ATP-binding proteins (LolD) and two transmembrane proteins (LolC and LolE).

Its subcellular location is the cell inner membrane. Its function is as follows. Part of the ABC transporter complex LolCDE involved in the translocation of mature outer membrane-directed lipoproteins, from the inner membrane to the periplasmic chaperone, LolA. Responsible for the formation of the LolA-lipoprotein complex in an ATP-dependent manner. This Oleidesulfovibrio alaskensis (strain ATCC BAA-1058 / DSM 17464 / G20) (Desulfovibrio alaskensis) protein is Lipoprotein-releasing system ATP-binding protein LolD.